The following is a 647-amino-acid chain: Microtubule-associated protein 9 (647 aa).

S2 is subject to N-acetylserine. Y12 is modified (phosphotyrosine). Disordered regions lie at residues 127–323, 344–421, 491–514, 530–553, 580–600, and 613–647; these read KSFS…ELIM, SATA…PDRA, KRLE…EALQ, KNRK…AEKK, NEKR…KQAI, and QERI…AKVF. Positions 133–145 are enriched in basic and acidic residues; the sequence is QNKDEEFEKDKIK. Residues 155-166 are compositionally biased toward polar residues; sequence IKSTSSAENNSL. Residues 174–186 are compositionally biased toward basic residues; sequence PSPRPRSMLKKKS. Residues 184–210 are a coiled coil; that stretch reads KKSHMEEKDGLEDKETALSEELELHSA. The segment covering 187–200 has biased composition (basic and acidic residues); that stretch reads HMEEKDGLEDKETA. Composition is skewed to polar residues over residues 210-219 and 239-249; these read APSSLPTPNG and CLTSLASSSLK. Over residues 268–287 the composition is skewed to basic and acidic residues; it reads DPNEEITENHNSLKSDENKE. A coiled-coil region spans residues 298 to 328; that stretch reads AVEKSKESQVTADDLEEEKAKAELIMDDDRT. Low complexity predominate over residues 365–374; sequence NNRASSASAR. Residues 443-628 are a coiled coil; sequence MHRIKRIESE…KQKKRHSFLE (186 aa).

Binds to purified microtubules via its C-terminus.

The protein resides in the cytoplasm. It is found in the cytoskeleton. It localises to the spindle. Its function is as follows. Involved in organization of the bipolar mitotic spindle. Required for bipolar spindle assembly, mitosis progression and cytokinesis. May act by stabilizing interphase microtubules. The chain is Microtubule-associated protein 9 (MAP9) from Homo sapiens (Human).